The primary structure comprises 278 residues: Envelope glycoprotein L (278 aa).

Positions 1 to 30 (MCRRPDCGFSFSPGPVILLWCCLLLPIVSS) are cleaved as a signal peptide. Positions 43 to 256 (VPAECPELTR…DKYYAGLPPE (214 aa)) constitute a gL betaherpesvirus-type domain. Residues Cys-154 and Cys-159 are joined by a disulfide bond.

Belongs to the herpesviridae glycoprotein L (gL) family. Betaherpesvirinae gL subfamily. Interacts with glycoprotein H (gH); this interaction is necessary for the correct processing and cell surface expression of gH. Forms the envelope pentamer complex (PC) composed of gH, gL, UL128, UL130, and UL131A. The pentamer interacts with host NRP2. Forms the envelope trimer complex composed of gH, gL, and gO. The trimer interacts with host PDGFRA.

Its subcellular location is the virion membrane. It is found in the host cell membrane. The protein localises to the host Golgi apparatus. It localises to the host trans-Golgi network. In terms of biological role, the heterodimer glycoprotein H-glycoprotein L is required for the fusion of viral and plasma membranes leading to virus entry into the host cell. Acts as a functional inhibitor of gH and maintains gH in an inhibited form. Upon binding to host integrins, gL dissociates from gH leading to activation of the viral fusion glycoproteins gB and gH. In human cytomegalovirus, forms two distincts complexes to mediate viral entry, a trimer and a pentamer at the surface of the virion envelope. The gH-gL-gO trimer is required for infection in fibroblasts by interacting with host PDGFRA. The gH-gL-UL128-UL130-UL131A pentamer is essential for viral entry in epithelial, endothelial and myeloid cells via interaction with host NRP2. The polypeptide is Envelope glycoprotein L (Human cytomegalovirus (strain PT) (HHV-5)).